A 126-amino-acid chain; its full sequence is Small ribosomal subunit protein uS12 (126 aa).

Residues 1 to 26 (MPTINQLVRKGRASETTKSKSPALQD) form a disordered region. The residue at position 89 (Asp89) is a 3-methylthioaspartic acid. Residues 101-126 (SLDTQGVKDRKQARSKYGAKRAKAAK) are disordered. Residues 113–126 (ARSKYGAKRAKAAK) are compositionally biased toward basic residues.

Belongs to the universal ribosomal protein uS12 family. In terms of assembly, part of the 30S ribosomal subunit. Contacts proteins S8 and S17. May interact with IF1 in the 30S initiation complex.

In terms of biological role, with S4 and S5 plays an important role in translational accuracy. Interacts with and stabilizes bases of the 16S rRNA that are involved in tRNA selection in the A site and with the mRNA backbone. Located at the interface of the 30S and 50S subunits, it traverses the body of the 30S subunit contacting proteins on the other side and probably holding the rRNA structure together. The combined cluster of proteins S8, S12 and S17 appears to hold together the shoulder and platform of the 30S subunit. The sequence is that of Small ribosomal subunit protein uS12 from Burkholderia pseudomallei (strain 1106a).